The sequence spans 634 residues: Ankyrin repeat protein OPG025 (634 aa).

6 ANK repeats span residues 36–69, 70–100, 103–134, 175–211, 307–337, and 412–441; these read DGETPLKAYVTKKNNNIKNDVVILLLSSVDYKNI, NDFDIFEYLCSDNIDIDLLKLLISKGIEINS, NGINIVEKYATTSNPNVDVFKLLLDKGIPTCS, MGKTVLYYYIITRSQDGYATSLDVINYLISHKKEMRY, IQDLLLEYVSYHTVYINVIKCMIDEGATLYR, and HGCSILYHCIKSHSVSLVEWLIDNGADINI.

Belongs to the orthopoxvirus OPG025 family. In terms of assembly, interacts with components of host SCF complex CUL1 and SKP1 and components of the cullin deneddylation/COP9 signalosome complex subunits COPS7A and COPS7B.

Its function is as follows. Plays a role in the inhibition of host immune repsonse by counteracting the action of interferons on early events in the viral replication cycle. The polypeptide is Ankyrin repeat protein OPG025 (OPG035) (Vaccinia virus (strain Western Reserve) (VACV)).